A 259-amino-acid polypeptide reads, in one-letter code: 3-deoxy-manno-octulosonate cytidylyltransferase (259 aa).

This sequence belongs to the KdsB family.

It is found in the cytoplasm. The enzyme catalyses 3-deoxy-alpha-D-manno-oct-2-ulosonate + CTP = CMP-3-deoxy-beta-D-manno-octulosonate + diphosphate. The protein operates within nucleotide-sugar biosynthesis; CMP-3-deoxy-D-manno-octulosonate biosynthesis; CMP-3-deoxy-D-manno-octulosonate from 3-deoxy-D-manno-octulosonate and CTP: step 1/1. It functions in the pathway bacterial outer membrane biogenesis; lipopolysaccharide biosynthesis. Activates KDO (a required 8-carbon sugar) for incorporation into bacterial lipopolysaccharide in Gram-negative bacteria. This Xanthomonas oryzae pv. oryzae (strain KACC10331 / KXO85) protein is 3-deoxy-manno-octulosonate cytidylyltransferase.